The following is a 689-amino-acid chain: Elongation factor G (689 aa).

A tr-type G domain is found at 8–282 (ERTRNIGIMA…AVVDYLPAPT (275 aa)). GTP-binding positions include 17-24 (AHIDAGKT), 81-85 (DTPGH), and 135-138 (NKMD).

It belongs to the TRAFAC class translation factor GTPase superfamily. Classic translation factor GTPase family. EF-G/EF-2 subfamily.

The protein resides in the cytoplasm. Functionally, catalyzes the GTP-dependent ribosomal translocation step during translation elongation. During this step, the ribosome changes from the pre-translocational (PRE) to the post-translocational (POST) state as the newly formed A-site-bound peptidyl-tRNA and P-site-bound deacylated tRNA move to the P and E sites, respectively. Catalyzes the coordinated movement of the two tRNA molecules, the mRNA and conformational changes in the ribosome. The sequence is that of Elongation factor G from Desulforudis audaxviator (strain MP104C).